The primary structure comprises 550 residues: MALKARALYSFQGENKEEINLMENEELQLLSDVSLDGWLQGTNSRGQTGLFPASYVEIQSSRSGSVQVDYSGNAREYTDPPHQGSYDDDDEEDDDDWDDWDDGQTVVDEPSGSNGVSRSELQHHHHYSRPEYSHRPRPALERQDSIASGKRGSVVGRNLNRFSSFVRSGVEAFVLGDVPQFGGVAESHAIEMAPKGPQWKANPRPFNCSVEEPTKQTKFKGIKSYISYRLTPDHSNSPVYRRYKHFDWLYNRLLHKFTVISLPHLPEKQATGRFEEDFIQKRKRRLVLWMDHMTSHPVLSQYDGFQHFLGCQDEKQWKAGKRRAERDELVGASFLLTLQLPTEHQDLQDVEERVDVFKAFSKKMDESVLQLSSVVSELARKHLGGFRKEFQKLGAAFQGLSHSFQLDPPYSSEPLVGAISHTGRTYEAVGEMFAEQPKNDQFRFLDTLSLYQGLLSNFPDIIHLQKGAFAKVKDSQRMSDEGRMEQDEADGVRKRCRVVGFALQAEINHFHQRRLLDFKQAIQHYLKEQIIFYRRVSQELEKTLHLYDEL.

The SH3 domain occupies 1-61 (MALKARALYS…PASYVEIQSS (61 aa)). The interval 62–152 (RSGSVQVDYS…QDSIASGKRG (91 aa)) is disordered. Over residues 86–102 (YDDDDEEDDDDWDDWDD) the composition is skewed to acidic residues. The span at 128-144 (SRPEYSHRPRPALERQD) shows a compositional bias: basic and acidic residues. The region spanning 206-316 (FNCSVEEPTK…HFLGCQDEKQ (111 aa)) is the PX domain. The 204-residue stretch at 347 to 550 (LQDVEERVDV…EKTLHLYDEL (204 aa)) folds into the BAR domain.

Belongs to the sorting nexin family.

It localises to the cytoplasm. Its subcellular location is the cytosol. It is found in the membrane. The protein localises to the cytoplasmic vesicle membrane. Plays a role in the reorganization of the cytoskeleton, endocytosis and cellular vesicle trafficking, both during interphase and at the end of mitotic cell divisions. Required for efficient progress through mitosis and cytokinesis. Required for normal formation of the cleavage furrow at the end of mitosis. Modulates endocytosis of cell-surface proteins. Promotes membrane tubulation (in vitro). May promote the formation of macropinosomes. This Xenopus laevis (African clawed frog) protein is Sorting nexin-33 (snx33).